A 481-amino-acid chain; its full sequence is Fibrinogen beta chain (481 aa).

The first 19 residues, 1 to 19, serve as a signal peptide directing secretion; it reads MRHLWLLLLLCVFSVQTQA. Residues 22-81 form a disordered region; that stretch reads DDYDEPTDSLDARGHRPVDRRKEEPPSLRPAPPPISGGGYRARPAKATANQKKVERRPPD. The span at 31-47 shows a compositional bias: basic and acidic residues; sequence LDARGHRPVDRRKEEPP. The segment at 35–37 is beta-chain polymerization, binding distal domain of another fibrin; it reads GHR. The stretch at 149–213 forms a coiled coil; sequence QAQVKENENV…SDISAQMEYC (65 aa). Cystine bridges form between Cys-221–Cys-306 and Cys-231–Cys-260. A Fibrinogen C-terminal domain is found at 222–478; it reads NIPVVSGKEC…RMSMKIRPFF (257 aa). Residue Asn-384 is glycosylated (N-linked (GlcNAc...) asparagine). Cysteines 414 and 427 form a disulfide.

As to quaternary structure, heterohexamer; disulfide linked. Contains 2 sets of 3 non-identical chains (alpha, beta and gamma). The 2 heterotrimers are in head to head conformation with the N-termini in a small central domain. Conversion of fibrinogen to fibrin is triggered by thrombin, which cleaves fibrinopeptides A and B from alpha and beta chains, and thus exposes the N-terminal polymerization sites responsible for the formation of the soft clot.

The protein resides in the secreted. In terms of biological role, cleaved by the protease thrombin to yield monomers which, together with fibrinogen alpha (FGA) and fibrinogen gamma (FGG), polymerize to form an insoluble fibrin matrix. Fibrin has a major function in hemostasis as one of the primary components of blood clots. In addition, functions during the early stages of wound repair to stabilize the lesion and guide cell migration during re-epithelialization. Was originally thought to be essential for platelet aggregation, based on in vitro studies using anticoagulated blood. However, subsequent studies have shown that it is not absolutely required for thrombus formation in vivo. Enhances expression of SELP in activated platelets via an ITGB3-dependent pathway. Maternal fibrinogen is essential for successful pregnancy. Fibrin deposition is also associated with infection, where it protects against IFNG-mediated hemorrhage. May also facilitate the immune response via both innate and T-cell mediated pathways. The chain is Fibrinogen beta chain (Fgb) from Mus musculus (Mouse).